A 181-amino-acid polypeptide reads, in one-letter code: Large ribosomal subunit protein uL5 (181 aa).

Belongs to the universal ribosomal protein uL5 family. Part of the 50S ribosomal subunit; part of the 5S rRNA/L5/L18/L25 subcomplex. Contacts the 5S rRNA and the P site tRNA. Forms a bridge to the 30S subunit in the 70S ribosome.

In terms of biological role, this is one of the proteins that bind and probably mediate the attachment of the 5S RNA into the large ribosomal subunit, where it forms part of the central protuberance. In the 70S ribosome it contacts protein S13 of the 30S subunit (bridge B1b), connecting the 2 subunits; this bridge is implicated in subunit movement. Contacts the P site tRNA; the 5S rRNA and some of its associated proteins might help stabilize positioning of ribosome-bound tRNAs. This is Large ribosomal subunit protein uL5 from Helicobacter pylori (strain ATCC 700392 / 26695) (Campylobacter pylori).